A 236-amino-acid chain; its full sequence is MTKQMLLENVSFRYGKTGPLIVDHVSCEVYSGDFIGIIGPNGGGKTTLTQLMLGLLQPVCGSISTYSVQDHRPLSIGWVPQHFSYDAAFPITVKETVLSGRLATLPWYGRYTQEDHEAAEEALLTVDLIDYKDSCFSHLSGGQIQRVLLARALAARPEFLLLDEPTANIDPVNQQKILQILSALNKHCTILMITHDLHHTAGCFNRVFFMNKTLTTLADTTTISERFCCNTFGRCP.

An ABC transporter domain is found at 5–236; that stretch reads MLLENVSFRY…FCCNTFGRCP (232 aa). 39–46 lines the ATP pocket; sequence GPNGGGKT.

It belongs to the ABC transporter superfamily.

The protein localises to the cell inner membrane. Functionally, part of an ATP-driven transport system CT_415/CT_416/CT_417 for a metal. Probably responsible for energy coupling to the transport system. In Chlamydia trachomatis serovar D (strain ATCC VR-885 / DSM 19411 / UW-3/Cx), this protein is Probable metal transport system ATP-binding protein CT_416.